The following is a 172-amino-acid chain: Early nodulin-like protein 17 (172 aa).

The first 26 residues, 1 to 26 (MARFTVLITAVVLAFLMAAPMPGVTA), serve as a signal peptide directing secretion. The Phytocyanin domain maps to 27–127 (KKYTVGENKF…GMKLSVKVEK (101 aa)). Asn-42, Asn-73, Asn-88, and Asn-101 each carry an N-linked (GlcNAc...) asparagine glycan. A disulfide bridge links Cys-80 with Cys-115. The GPI-anchor amidated glycine moiety is linked to residue Gly-141. Positions 142 to 172 (SVSMVTGLAQFMIPVSLFAFPAMWDVISRMW) are cleaved as a propeptide — removed in mature form.

Belongs to the early nodulin-like (ENODL) family.

The protein localises to the cell membrane. May act as a carbohydrate transporter. This chain is Early nodulin-like protein 17, found in Arabidopsis thaliana (Mouse-ear cress).